The primary structure comprises 254 residues: 3-deoxy-manno-octulosonate cytidylyltransferase (254 aa).

The protein belongs to the KdsB family.

The protein localises to the cytoplasm. It carries out the reaction 3-deoxy-alpha-D-manno-oct-2-ulosonate + CTP = CMP-3-deoxy-beta-D-manno-octulosonate + diphosphate. The protein operates within nucleotide-sugar biosynthesis; CMP-3-deoxy-D-manno-octulosonate biosynthesis; CMP-3-deoxy-D-manno-octulosonate from 3-deoxy-D-manno-octulosonate and CTP: step 1/1. It functions in the pathway bacterial outer membrane biogenesis; lipopolysaccharide biosynthesis. In terms of biological role, activates KDO (a required 8-carbon sugar) for incorporation into bacterial lipopolysaccharide in Gram-negative bacteria. The sequence is that of 3-deoxy-manno-octulosonate cytidylyltransferase from Pseudomonas entomophila (strain L48).